A 523-amino-acid polypeptide reads, in one-letter code: Putative glucosylceramidase 1 (523 aa).

A signal peptide spans 1–23 (MKSRFLLKIFIFLAVFGVDSVRA). N-linked (GlcNAc...) asparagine glycosylation occurs at N168. E358 (nucleophile) is an active-site residue.

The protein belongs to the glycosyl hydrolase 30 family.

It catalyses the reaction a beta-D-glucosylceramide + H2O = an N-acyl-sphingoid base + D-glucose. It carries out the reaction a beta-D-glucosyl-(1&lt;-&gt;1')-N-acylsphing-4-enine + H2O = an N-acylsphing-4-enine + D-glucose. The enzyme catalyses an N-acyl-1-beta-D-glucosyl-15-methylhexadecasphing-4-enine + H2O = an N-acyl-15-methylhexadecasphing-4-enine + D-glucose. It functions in the pathway lipid metabolism; sphingolipid metabolism. In terms of biological role, glucosylceramidase that catalyzes the hydrolysis of glucosylceramides into free ceramides and glucose. C.elegans contains specific sphingoid bases, which are unique or different in structure compared to the sphingoid bases found in other animals. Two examples of these distinctive compounds are: 15-methylhexadecasphinganine and 15-methylhexadecasphing-4-enine. This Caenorhabditis elegans protein is Putative glucosylceramidase 1 (gba-1).